The primary structure comprises 509 residues: Maturase K (509 aa).

Belongs to the intron maturase 2 family. MatK subfamily.

It localises to the plastid. The protein localises to the chloroplast. Functionally, usually encoded in the trnK tRNA gene intron. Probably assists in splicing its own and other chloroplast group II introns. This Pereskia aculeata (Barbados gooseberry) protein is Maturase K.